The following is a 320-amino-acid chain: Glycerol-3-phosphate dehydrogenase [NAD(P)+] (320 aa).

The NADPH site is built by S14, F15, R35, and K109. Positions 109 and 137 each coordinate sn-glycerol 3-phosphate. A141 serves as a coordination point for NADPH. Sn-glycerol 3-phosphate-binding residues include K192, D248, S258, R259, and N260. The active-site Proton acceptor is K192. R259 contributes to the NADPH binding site. NADPH contacts are provided by L283 and E285.

The protein belongs to the NAD-dependent glycerol-3-phosphate dehydrogenase family.

It is found in the cytoplasm. It catalyses the reaction sn-glycerol 3-phosphate + NAD(+) = dihydroxyacetone phosphate + NADH + H(+). It carries out the reaction sn-glycerol 3-phosphate + NADP(+) = dihydroxyacetone phosphate + NADPH + H(+). Its pathway is membrane lipid metabolism; glycerophospholipid metabolism. Catalyzes the reduction of the glycolytic intermediate dihydroxyacetone phosphate (DHAP) to sn-glycerol 3-phosphate (G3P), the key precursor for phospholipid synthesis. The sequence is that of Glycerol-3-phosphate dehydrogenase [NAD(P)+] from Rickettsia typhi (strain ATCC VR-144 / Wilmington).